We begin with the raw amino-acid sequence, 312 residues long: Isoflavone reductase homolog (312 aa).

Residues 10-16 (GGTGYVG), Arg35, and Lys44 contribute to the NADP(+) site. Catalysis depends on Lys138, which acts as the Proton acceptor. Arg142 provides a ligand contact to NADP(+). His270 lines the substrate pocket.

It belongs to the NmrA-type oxidoreductase family. Isoflavone reductase subfamily.

The protein is Isoflavone reductase homolog of Lupinus albus (White lupine).